Consider the following 380-residue polypeptide: O-phospho-L-seryl-tRNA:Cys-tRNA synthase (380 aa).

Residues 86-87, N192, and 215-217 contribute to the pyridoxal 5'-phosphate site; these read AR and SGH. Position 218 is an N6-(pyridoxal phosphate)lysine (K218).

The protein belongs to the SepCysS family. As to quaternary structure, homodimer. Interacts with SepRS. The cofactor is pyridoxal 5'-phosphate.

The catalysed reaction is O-phospho-L-seryl-tRNA(Cys) + hydrogen sulfide + H(+) = L-cysteinyl-tRNA(Cys) + phosphate. Converts O-phospho-L-seryl-tRNA(Cys) (Sep-tRNA(Cys)) to L-cysteinyl-tRNA(Cys) (Cys-tRNA(Cys)). This Methanococcus maripaludis (strain C7 / ATCC BAA-1331) protein is O-phospho-L-seryl-tRNA:Cys-tRNA synthase.